The primary structure comprises 84 residues: Small ribosomal subunit protein bS16 (84 aa).

The protein belongs to the bacterial ribosomal protein bS16 family.

The sequence is that of Small ribosomal subunit protein bS16 from Desulforapulum autotrophicum (strain ATCC 43914 / DSM 3382 / VKM B-1955 / HRM2) (Desulfobacterium autotrophicum).